A 140-amino-acid polypeptide reads, in one-letter code: 3-hydroxyacyl-[acyl-carrier-protein] dehydratase FabZ (140 aa).

The active site involves His-47.

Belongs to the thioester dehydratase family. FabZ subfamily.

Its subcellular location is the cytoplasm. It carries out the reaction a (3R)-hydroxyacyl-[ACP] = a (2E)-enoyl-[ACP] + H2O. Functionally, involved in unsaturated fatty acids biosynthesis. Catalyzes the dehydration of short chain beta-hydroxyacyl-ACPs and long chain saturated and unsaturated beta-hydroxyacyl-ACPs. The sequence is that of 3-hydroxyacyl-[acyl-carrier-protein] dehydratase FabZ from Streptococcus pneumoniae serotype 4 (strain ATCC BAA-334 / TIGR4).